The primary structure comprises 149 residues: Transcriptional repressor NrdR (149 aa).

A zinc finger lies at 3–34; the sequence is CPFCAAVDTKVIDSRLVGDGSQVRRRRQCLVC. The ATP-cone domain maps to 49–139; it reads PRVIKSDEVR…VYRSFEDIRE (91 aa).

The protein belongs to the NrdR family. The cofactor is Zn(2+).

In terms of biological role, negatively regulates transcription of bacterial ribonucleotide reductase nrd genes and operons by binding to NrdR-boxes. This chain is Transcriptional repressor NrdR, found in Serratia proteamaculans (strain 568).